The primary structure comprises 75 residues: UPF0270 protein PSEEN1465 (75 aa).

The protein belongs to the UPF0270 family.

The chain is UPF0270 protein PSEEN1465 from Pseudomonas entomophila (strain L48).